The primary structure comprises 130 residues: L-ectoine synthase (130 aa).

This sequence belongs to the ectoine synthase family.

It catalyses the reaction (2S)-4-acetamido-2-aminobutanoate = L-ectoine + H2O. It functions in the pathway amine and polyamine biosynthesis; ectoine biosynthesis; L-ectoine from L-aspartate 4-semialdehyde: step 3/3. In terms of biological role, catalyzes the circularization of gamma-N-acetyl-alpha,gamma-diaminobutyric acid (ADABA) to ectoine (1,4,5,6-tetrahydro-2-methyl-4-pyrimidine carboxylic acid), which is an excellent osmoprotectant. The protein is L-ectoine synthase of Desulfatibacillum aliphaticivorans.